A 220-amino-acid polypeptide reads, in one-letter code: Translation initiation factor 6 (220 aa).

The protein belongs to the eIF-6 family.

Its function is as follows. Binds to the 50S ribosomal subunit and prevents its association with the 30S ribosomal subunit to form the 70S initiation complex. The sequence is that of Translation initiation factor 6 from Pyrobaculum arsenaticum (strain DSM 13514 / JCM 11321 / PZ6).